The chain runs to 348 residues: WD repeat-containing protein JIP5 (348 aa).

7 WD repeats span residues 5–44 (KLKNQPFDVAFHPKEPVVFSSLLTGQVCAWSYDDATGETS), 51–90 (PSKRTARALSIEENGDEIWMGGKSGSLFQLSTRDGSMTRE), 94–132 (AHECPINRVYCVNRNLVATGDDDGVIKLWDPRQADSIRT), 135–174 (QHFDYISDFTYFDDKRQLVATSGDGHLSVIDIRSNKSTPL), 179–218 (DQEDELLSIVPIKGGQKAIVGSGLGILSVWNRQMGWADSV), 223–261 (GHPASIDAIVALTPDIIATGSEDGMIRVIQVLPHKFLGV), and 264–304 (THEE…EDSD). A compositionally biased stretch (acidic residues) spans 299-318 (LFEDSDEDDEMEEDEPDSDE). The segment at 299-348 (LFEDSDEDDEMEEDEPDSDEEKSKKKKKDNGMKDMSRGQAENDGSFFADL) is disordered.

It belongs to the WD repeat WDR55 family.

The protein resides in the nucleus. It is found in the nucleolus. This Cryptococcus neoformans var. neoformans serotype D (strain JEC21 / ATCC MYA-565) (Filobasidiella neoformans) protein is WD repeat-containing protein JIP5 (JIP5).